We begin with the raw amino-acid sequence, 103 residues long: Large ribosomal subunit protein eL42 (103 aa).

Residues 37–56 (GKRRYDRKQSGFGGQTKPVF) form a disordered region.

The protein belongs to the eukaryotic ribosomal protein eL42 family.

The sequence is that of Large ribosomal subunit protein eL42 (rpl36a) from Dictyostelium discoideum (Social amoeba).